Here is an 86-residue protein sequence, read N- to C-terminus: High affinity immunoglobulin epsilon receptor subunit gamma (86 aa).

The signal sequence occupies residues 1 to 18 (MYPAVVLLLLLLVEQAAA). Over 19-23 (LGEPQ) the chain is Extracellular. A helical transmembrane segment spans residues 24–44 (LCYILDAILFLYGIILTLLYC). Residues 45–86 (RLKIQVRKATVASYEKPDGIYTGLSTRNQETYETLKHEKPPQ) are Cytoplasmic-facing. Residues 54-82 (TVASYEKPDGIYTGLSTRNQETYETLKHE) enclose the ITAM domain. Tyrosine 65 is modified (phosphotyrosine). Serine 69 is modified (phosphoserine). Tyrosine 76 bears the Phosphotyrosine mark. Threonine 78 is subject to Phosphothreonine.

Belongs to the CD3Z/FCER1G family. As to quaternary structure, igE Fc receptor is a tetramer of an alpha chain, a beta chain, and two disulfide linked gamma chains. Associates with FCGR1A; forms a functional signaling complex. The signaling subunit of immunoglobulin gamma (IgG) Fc receptor complex. As a homodimer or a heterodimer of CD247 and FCER1G, associates with the ligand binding subunit FCGR3A to form a functional receptor complex. Associates with CLEC6A. Interacts with CLEC4E. Interacts (via ITAM domain) with SYK (via SH2 domains); activates SYK, enabling integrin-mediated activation of neutrophils and macrophages. Interacts with CSF2RB and recruits SYK in response to IL3 stimulation; this interaction is direct. Interacts with CD300LH; the interaction may be indirect. Interacts with CD300LD. Interacts with TARM1.

It localises to the cell membrane. In terms of biological role, adapter protein containing an immunoreceptor tyrosine-based activation motif (ITAM) that transduces activation signals from various immunoreceptors. As a component of the high-affinity immunoglobulin E (IgE) receptor, mediates allergic inflammatory signaling in mast cells. As a constitutive component of interleukin-3 receptor complex, selectively mediates interleukin 4/IL4 production by basophils priming T-cells toward effector T-helper 2 subset. Associates with pattern recognition receptors CLEC4D and CLEC4E to form a functional signaling complex in myeloid cells. Binding of mycobacterial trehalose 6,6'-dimycolate (TDM) to this receptor complex leads to phosphorylation of ITAM, triggering activation of SYK, CARD9 and NF-kappa-B, consequently driving maturation of antigen-presenting cells and shaping antigen-specific priming of T-cells toward effector T-helper 1 and T-helper 17 cell subtypes. May function cooperatively with other activating receptors. Functionally linked to integrin beta-2/ITGB2-mediated neutrophil activation. Also involved in integrin alpha-2/ITGA2-mediated platelet activation. In Cavia porcellus (Guinea pig), this protein is High affinity immunoglobulin epsilon receptor subunit gamma (FCER1G).